The chain runs to 465 residues: MGGAVVDEGPTGVKAPDGGWGWAVLFGCFVITGFSYAFPKAVSVFFKELIQEFGIGYSDTAWISSILLAMLYGTGPLCSVCVNRFGCRPVMLVGGLFASLGMVAASFCRSIIQVYLTTGVITGLGLALNFQPSLIMLNRYFSKRRPMANGLAAAGSPVFLCALSPLGQLLQDRYGWRGGFLILGGLLLNCCVCAALMRPLVVTAQPGSGPPRPSRRLLDLSVFRDRGFVLYAVAASVMVLGLFVPPVFVVSYAKDLGVPDTKAAFLLTILGFIDIFARPAAGFVAGLGKVRPYSVYLFSFSMFFNGLADLAGSTAGDYGGLVVFCIFFGISYGMVGALQFEVLMAIVGTHKFSSAIGLVLLMEAVAVLVGPPSGGKLLDATHVYMYVFILAGAEVLTSSLILLLGNFFCIRKKPKEPQPEVAAAEEEKLHKPPADSGVDLREVEHFLKAEPEKNGEVVHTPETSV.

The Cytoplasmic segment spans residues 2–17 (GGAVVDEGPTGVKAPD). The helical transmembrane segment at 18-38 (GGWGWAVLFGCFVITGFSYAF) threads the bilayer. Topologically, residues 39–61 (PKAVSVFFKELIQEFGIGYSDTA) are extracellular. A helical membrane pass occupies residues 62-82 (WISSILLAMLYGTGPLCSVCV). The Cytoplasmic portion of the chain corresponds to 83-84 (NR). A helical membrane pass occupies residues 85-105 (FGCRPVMLVGGLFASLGMVAA). Over 106-109 (SFCR) the chain is Extracellular. A helical membrane pass occupies residues 110–130 (SIIQVYLTTGVITGLGLALNF). Over 131–149 (QPSLIMLNRYFSKRRPMAN) the chain is Cytoplasmic. The helical transmembrane segment at 150-170 (GLAAAGSPVFLCALSPLGQLL) threads the bilayer. Over 171–179 (QDRYGWRGG) the chain is Extracellular. Residues 180–200 (FLILGGLLLNCCVCAALMRPL) traverse the membrane as a helical segment. The Cytoplasmic portion of the chain corresponds to 201-227 (VVTAQPGSGPPRPSRRLLDLSVFRDRG). A helical membrane pass occupies residues 228-248 (FVLYAVAASVMVLGLFVPPVF). Topologically, residues 249–264 (VVSYAKDLGVPDTKAA) are extracellular. Residues 265–285 (FLLTILGFIDIFARPAAGFVA) form a helical membrane-spanning segment. Over 286 to 294 (GLGKVRPYS) the chain is Cytoplasmic. The chain crosses the membrane as a helical span at residues 295–315 (VYLFSFSMFFNGLADLAGSTA). At 316–317 (GD) the chain is on the extracellular side. The helical transmembrane segment at 318–338 (YGGLVVFCIFFGISYGMVGAL) threads the bilayer. Residues 339–351 (QFEVLMAIVGTHK) lie on the Cytoplasmic side of the membrane. The chain crosses the membrane as a helical span at residues 352–372 (FSSAIGLVLLMEAVAVLVGPP). The Extracellular portion of the chain corresponds to 373-384 (SGGKLLDATHVY). Residues 385 to 405 (MYVFILAGAEVLTSSLILLLG) form a helical membrane-spanning segment. Topologically, residues 406–465 (NFFCIRKKPKEPQPEVAAAEEEKLHKPPADSGVDLREVEHFLKAEPEKNGEVVHTPETSV) are cytoplasmic. Residues 419 to 438 (PEVAAAEEEKLHKPPADSGV) form a disordered region. Basolateral sorting signal regions lie at residues 423-441 (AAEE…VDLR) and 441-465 (REVE…ETSV). The segment covering 425 to 438 (EEEKLHKPPADSGV) has biased composition (basic and acidic residues). Phosphoserine is present on Ser-436. Residue Thr-460 is modified to Phosphothreonine. Ser-464 bears the Phosphoserine mark.

It belongs to the major facilitator superfamily. Monocarboxylate porter (TC 2.A.1.13) family. As to quaternary structure, interacts with BSG; interaction mediates SLC16A3 targeting to the plasma membrane. In terms of tissue distribution, highly expressed in skeletal muscle.

It localises to the cell membrane. Its subcellular location is the basolateral cell membrane. The enzyme catalyses (S)-lactate(in) + H(+)(in) = (S)-lactate(out) + H(+)(out). The catalysed reaction is pyruvate(out) + H(+)(out) = pyruvate(in) + H(+)(in). Proton-dependent transporter of monocarboxylates such as L-lactate and pyruvate. Plays a predominant role in L-lactate efflux from highly glycolytic cells. This is Monocarboxylate transporter 4 (SLC16A3) from Homo sapiens (Human).